Consider the following 275-residue polypeptide: Interleukin-2 receptor subunit alpha (275 aa).

Residues 1–21 (MEPSLLMWRFFVFIVVPGCVT) form the signal peptide. In terms of domain architecture, Sushi 1 spans 22–81 (EACHDDPPSLRNAMFKVFRYEVGTMINCDCKTGFRRVSAVMRCVGDSSHSAWENRCFCNS). The Extracellular portion of the chain corresponds to 22 to 243 (EACHDDPPSL…DTFIFTTEYQ (222 aa)). Intrachain disulfides connect cysteine 24-cysteine 64, cysteine 49-cysteine 77, and cysteine 51-cysteine 79. Asparagine 80 carries N-linked (GlcNAc...) asparagine glycosylation. The tract at residues 88-130 (QVKQVTPAPEEHREKKHTDAQNQTQPPEEADLPGHCEEPPPWE) is disordered. Residues 96–106 (PEEHREKKHTD) are compositionally biased toward basic and acidic residues. An N-linked (GlcNAc...) asparagine glycan is attached at asparagine 109. Positions 119 to 130 (LPGHCEEPPPWE) are enriched in basic and acidic residues. In terms of domain architecture, Sushi 2 spans 121–186 (GHCEEPPPWE…WTRPRLKCIR (66 aa)). 2 disulfide bridges follow: cysteine 123–cysteine 168 and cysteine 152–cysteine 184. Residues 188-221 (GEHGQASDDAEPQESTEAPPGSGTFLPTRMAGTT) are disordered. Residues 244-262 (IAVAGCTLLLASILLLSCL) form a helical membrane-spanning segment. Topologically, residues 263–275 (TWQRKWKKNRRTI) are cytoplasmic.

Non-covalent dimer of an alpha and a beta subunit. IL2R exists in 3 different forms: a high affinity dimer, an intermediate affinity monomer (beta subunit), and a low affinity monomer (alpha subunit). The high and intermediate affinity forms also associate with a gamma subunit.

The protein resides in the membrane. Functionally, receptor for interleukin-2. The receptor is involved in the regulation of immune tolerance by controlling regulatory T cells (TREGs) activity. TREGs suppress the activation and expansion of autoreactive T-cells. The sequence is that of Interleukin-2 receptor subunit alpha (IL2RA) from Bos taurus (Bovine).